Consider the following 376-residue polypeptide: Lysocardiolipin acyltransferase 1 (376 aa).

The helical transmembrane segment at 9–29 (FILFLFAGSFFGSIFMLGPIL) threads the bilayer. Residue N35 is glycosylated (N-linked (GlcNAc...) asparagine). Residues 48–68 (ATWLTLPVALLETMFGVRVVI) form a helical membrane-spanning segment. The HXXXXD motif signature appears at 85-90 (HRTRVD). The residue at position 183 (K183) is an N6-acetyllysine. Transmembrane regions (helical) follow at residues 309–329 (LLSI…IYLY) and 336–356 (FIIS…LEII).

Belongs to the 1-acyl-sn-glycerol-3-phosphate acyltransferase family. In terms of tissue distribution, widely expressed with highest expression in heart, liver and 12.5 dpc aorta-gonad-mesonephros and lower levels in the 16 dpc fetal liver and adult bone marrow. In bone marrow, highest levels are found in B-cells compared with whole bone marrow, T-cells, erythrocytes, and granulocytes.

The protein localises to the endoplasmic reticulum membrane. It carries out the reaction a 1-acyl-sn-glycero-3-phosphate + an acyl-CoA = a 1,2-diacyl-sn-glycero-3-phosphate + CoA. It catalyses the reaction a 1-acyl-sn-glycero-3-phospho-(1D-myo-inositol) + an acyl-CoA = a 1,2-diacyl-sn-glycero-3-phospho-(1D-myo-inositol) + CoA. The enzyme catalyses 1-acyl-sn-glycero-3-phospho-(1'-sn-glycerol) + an acyl-CoA = a 1,2-diacyl-sn-glycero-3-phospho-(1'-sn-glycerol) + CoA. The catalysed reaction is 1-hexadecanoyl-sn-glycero-3-phosphate + (9Z)-octadecenoyl-CoA = 1-hexadecanoyl-2-(9Z-octadecenoyl)-sn-glycero-3-phosphate + CoA. It carries out the reaction 1-(9Z-octadecenoyl)-sn-glycero-3-phosphate + (9Z)-octadecenoyl-CoA = 1,2-di-(9Z-octadecenoyl)-sn-glycero-3-phosphate + CoA. It catalyses the reaction 1-(9Z,12Z)-octadecadienoyl-sn-glycero-3-phosphate + (9Z)-octadecenoyl-CoA = 1-(9Z,12Z)-octadecadienoyl-2-(9Z)-octadecenoyl-sn-glycero-3-phosphate + CoA. The enzyme catalyses 1-(9Z,12Z,15Z)-octadecatrienoyl-sn-glycero-3-phosphate + (9Z)-octadecenoyl-CoA = 1-(9Z,12Z,15Z)-octadecatrienoyl-2-(9Z)-octadecenoyl-sn-glycero-3-phosphate + CoA. The catalysed reaction is 1-(9Z-octadecenoyl)-sn-glycero-3-phosphate + hexadecanoyl-CoA = 1-(9Z)-octadecenoyl-2-hexadecanoyl-sn-glycero-3-phosphate + CoA. It carries out the reaction 1-(9Z-octadecenoyl)-sn-glycero-3-phosphate + octadecanoyl-CoA = 1-(9Z-octadecenoyl)-2-octadecanoyl-sn-glycero-3-phosphate + CoA. It catalyses the reaction 1-acyl-sn-glycero-3-phospho-(1'-sn-glycerol) + (9Z)-octadecenoyl-CoA = 1-acyl-2-(9Z-octadecenoyl)-sn-glycero-3-phospho-(1'-sn-glycerol) + CoA. The enzyme catalyses a 1-acyl-sn-glycero-3-phospho-(1D-myo-inositol) + (9Z)-octadecenoyl-CoA = a 1-acyl-2-(9Z-octadecenoyl)-sn-glycero-3-phospho-(1D-myo-inositol) + CoA. The catalysed reaction is 1-hexadecanoyl-sn-glycero-3-phospho-(1D-myo-inositol) + hexadecanoyl-CoA = 1,2-dihexadecanoyl-sn-glycero-3-phospho-(1D-myo-inositol) + CoA. It carries out the reaction 1-hexadecanoyl-sn-glycero-3-phospho-(1D-myo-inositol) + octadecanoyl-CoA = 1-hexadecanoyl-2-octadecanoyl-sn-glycero-3-phospho-(1D-myo-inositol) + CoA. It catalyses the reaction 1-hexadecanoyl-sn-glycero-3-phospho-(1D-myo-inositol) + (9Z)-octadecenoyl-CoA = 1-hexadecanoyl-2-(9Z-octadecenoyl)-sn-glycero-3-phospho-(1D-myo-inositol) + CoA. The enzyme catalyses 1-hexadecanoyl-sn-glycero-3-phospho-(1D-myo-inositol) + (9Z,12Z)-octadecadienoyl-CoA = 1-hexadecanoyl-2-(9Z,12Z-octadecadienoyl)-sn-glycero-3-phospho-(1D-myo-inositol) + CoA. The catalysed reaction is 1-hexadecanoyl-sn-glycero-3-phospho-(1D-myo-inositol) + (5Z,8Z,11Z,14Z)-eicosatetraenoyl-CoA = 1-hexadecanoyl-2-(5Z,8Z,11Z,14Z-eicosatetraenoyl)-sn-glycero-3-phospho-D-myo-inositol + CoA. It carries out the reaction 1-hexadecanoyl-sn-glycero-3-phospho-(1'-sn-glycerol) + hexadecanoyl-CoA = 1,2-dihexadecanoyl-sn-glycero-3-phospho-(1'-sn-glycerol) + CoA. It catalyses the reaction 1-hexadecanoyl-sn-glycero-3-phospho-(1'-sn-glycerol) + octadecanoyl-CoA = 1-hexadecanoyl-2-octadecanoyl-sn-glycero-3-phospho-(1'-sn-glycerol) + CoA. The enzyme catalyses 1-hexadecanoyl-sn-glycero-3-phospho-(1'-sn-glycerol) + (9Z)-octadecenoyl-CoA = 1-hexadecanoyl-2-(9Z-octadecenoyl)-sn-glycero-3-phospho-(1'-sn-glycerol) + CoA. The catalysed reaction is 1-hexadecanoyl-sn-glycero-3-phospho-(1'-sn-glycerol) + (9Z,12Z)-octadecadienoyl-CoA = 1-hexadecanoyl-2-(9Z,12Z-octadecadienoyl)-sn-glycero-3-phospho-(1'-sn-glycerol) + CoA. It carries out the reaction 1-tetradecanoyl-sn-glycero-3-phospho-(1'-sn-glycerol) + (9Z)-octadecenoyl-CoA = 1-tetradecanoyl-2-(9Z-octadecenoyl)-sn-glycero-3-phospho-(1'-sn-glycerol) + CoA. It catalyses the reaction 1-octadecanoyl-sn-glycero-3-phospho-(1'-sn-glycerol) + (9Z)-octadecenoyl-CoA = 1-octadecanoyl-2-(9Z-octadecenoyl)-sn-glycero-3-phospho-(1'-sn-glycerol) + CoA. The enzyme catalyses 1-(9Z-octadecenoyl)-sn-glycero-3-phospho-(1'-sn-glycerol) + (9Z)-octadecenoyl-CoA = 1,2-di-(9Z-octadecenoyl)-sn-glycero-3-phospho-(1'-sn-glycerol) + CoA. The catalysed reaction is 1-hexadecanoyl-sn-glycero-3-phospho-(1D-myo-inositol) + dodecanoyl-CoA = 1-hexadecanoyl-2-dodecanoyl-sn-glycero-3-phospho-(1D-myo-inositol) + CoA. It carries out the reaction 1',3'-bis-[1-acyl-sn-glycero-3-phospho]-glycerol + (9Z)-octadecenoyl-CoA = 1'-[1-acyl-2-(9Z)-octadecenoyl-sn-glycero-3-phospho],3'-[1-acyl,2-hydroxy-sn-glycero-3-phospho]-glycerol + CoA. It catalyses the reaction 1'-[1,2-diacyl-sn-glycero-3-phospho],3'-[1-acyl-sn-glycero-3-phospho]-glycerol + (9Z)-octadecenoyl-CoA = 1'-[1,2-diacyl-sn-glycero-3-phospho],3'-[1-acyl,2-(9Z)-octadecenoyl-sn-glycero-3-phospho]-glycerol + CoA. The enzyme catalyses 1'-[1,2-diacyl-sn-glycero-3-phospho],3'-[1-acyl-sn-glycero-3-phospho]-glycerol + (9Z,12Z)-octadecadienoyl-CoA = 1'-[1,2-diacyl-sn-glycero-3-phospho],3'-[1-acyl,2-(9Z,12Z)-octadecadienoyl-sn-glycero-3-phospho]-glycerol + CoA. The catalysed reaction is 1'-[1,2-diacyl-sn-glycero-3-phospho],3'-[1-acyl-sn-glycero-3-phospho]-glycerol + dodecanoyl-CoA = 1'-[1,2-diacyl-sn-glycero-3-phospho],3'-[1-acyl,2-dodecanoyl-sn-glycero-3-phospho]-glycerol + CoA. It carries out the reaction 1',3'-bis-[1-acyl-sn-glycero-3-phospho]-glycerol + dodecanoyl-CoA = 1'-[1-acyl-2-dodecanoyl-sn-glycero-3-phospho],3'-[1-acyl,2-hydroxy-sn-glycero-3-phospho]-glycerol + CoA. It catalyses the reaction a 1-acyl-sn-glycero-3-phosphate + (9Z)-octadecenoyl-CoA = a 1-acyl-2-(9Z-octadecenoyl)-sn-glycero-3-phosphate + CoA. The enzyme catalyses 1',3'-bis-[1-acyl-sn-glycero-3-phospho]-glycerol + (9Z,12Z)-octadecadienoyl-CoA = 1'-[1-acyl-2-(9Z,12Z)-octadecadienoyl-sn-glycero-3-phospho],3'-[1-acyl,2-hydroxy-sn-glycero-3-phospho]-glycerol + CoA. The catalysed reaction is 1',3'-bis-[1-acyl-sn-glycero-3-phospho]-glycerol + hexadecanoyl-CoA = 1'-[1-acyl-2-hexadecanoyl-sn-glycero-3-phospho],3'-[1-acyl,2-hydroxy-sn-glycero-3-phospho]-glycerol + CoA. It carries out the reaction 1',3'-bis-[1-acyl-sn-glycero-3-phospho]-glycerol + octadecanoyl-CoA = 1'-[1-acyl-2-octadecanoyl-sn-glycero-3-phospho],3'-[1-acyl,2-hydroxy-sn-glycero-3-phospho]-glycerol + CoA. It catalyses the reaction 1'-[1,2-diacyl-sn-glycero-3-phospho],3'-[1-acyl-sn-glycero-3-phospho]-glycerol + octanoyl-CoA = 1'-[1,2-diacyl-sn-glycero-3-phospho],3'-[1-acyl,2-octanoyl-sn-glycero-3-phospho]-glycerol + CoA. The enzyme catalyses 1',3'-bis-[1-acyl-sn-glycero-3-phospho]-glycerol + octanoyl-CoA = 1'-[1-acyl-2-octanoyl-sn-glycero-3-phospho],3'-[1-acyl,2-hydroxy-sn-glycero-3-phospho]-glycerol + CoA. The catalysed reaction is 1'-[1,2-diacyl-sn-glycero-3-phospho],3'-[1-acyl-sn-glycero-3-phospho]-glycerol + hexadecanoyl-CoA = 1'-[1,2-diacyl-sn-glycero-3-phospho],3'-[1-acyl,2-hexadecanoyl-sn-glycero-3-phospho]-glycerol + CoA. It carries out the reaction 1'-[1,2-diacyl-sn-glycero-3-phospho],3'-[1-acyl-sn-glycero-3-phospho]-glycerol + (5Z,8Z,11Z,14Z)-eicosatetraenoyl-CoA = 1'-[1,2-diacyl-sn-glycero-3-phospho],3'-[1-acyl,2-(5Z,8Z,11Z,14Z)-eicosatetraenoyl-sn-glycero-3-phospho]-glycerol + CoA. It catalyses the reaction 1',3'-bis-[1-acyl-sn-glycero-3-phospho]-glycerol + (5Z,8Z,11Z,14Z)-eicosatetraenoyl-CoA = 1'-[1-acyl-2-(5Z,8Z,11Z,14Z)-eicosatetraenoyl-sn-glycero-3-phospho],3'-[1-acyl,2-hydroxy-sn-glycero-3-phospho]-glycerol + CoA. The enzyme catalyses a 1-acyl-sn-glycero-3-phospho-(1D-myo-inositol) + octadecanoyl-CoA = a 1-acyl-2-octadecanoyl-sn-glycero-3-phospho-(1D-myo-inositol) + CoA. The catalysed reaction is a 2-acyl-sn-glycero-3-phospho-D-myo-inositol + octadecanoyl-CoA = 1-octadecanoyl-2-acyl-sn-glycero-3-phospho-1D-myo-inositol + CoA. It functions in the pathway phospholipid metabolism; CDP-diacylglycerol biosynthesis; CDP-diacylglycerol from sn-glycerol 3-phosphate: step 2/3. Exhibits acyl-CoA:lysocardiolipin acyltransferase (ALCAT) activity; catalyzes the reacylation of lyso-cardiolipin to cardiolipin (CL), a key step in CL remodeling. Recognizes both monolysocardiolipin and dilysocardiolipin as substrates with a preference for linoleoyl-CoA and oleoyl-CoA as acyl donors. Also exhibits 1-acyl-sn-glycerol-3-phosphate acyltransferase activity (AGPAT) activity; converts 1-acyl-sn-glycerol-3- phosphate (lysophosphatidic acid or LPA) into 1,2-diacyl-sn-glycerol-3- phosphate (phosphatidic acid or PA) by incorporating an acyl moiety at the sn-2 position of the glycerol backbone. Possesses lysophosphatidylinositol acyltransferase (LPIAT) activity. Possesses lysophosphatidylglycerol acyltransferase (LPGAT) activity. Required for establishment of the hematopoietic and endothelial lineages. This chain is Lysocardiolipin acyltransferase 1 (Lclat1), found in Mus musculus (Mouse).